A 330-amino-acid chain; its full sequence is B3 domain-containing protein REM21 (330 aa).

Positions 23 to 116 form a DNA-binding region, TF-B3; sequence PRFFTVFLSH…SYEVSIYGRG (94 aa). Residues 129-138 are compositionally biased toward acidic residues; the sequence is EISDDTEDDN. The tract at residues 129 to 169 is disordered; it reads EISDDTEDDNVSLHSPSNVSLDSLSNDSHHSTSNVSLRSLS. The segment covering 142 to 162 has biased composition (low complexity); it reads HSPSNVSLDSLSNDSHHSTSN.

Its subcellular location is the nucleus. This chain is B3 domain-containing protein REM21 (REM21), found in Arabidopsis thaliana (Mouse-ear cress).